A 271-amino-acid polypeptide reads, in one-letter code: Acyl-[acyl-carrier-protein]--UDP-N-acetylglucosamine O-acyltransferase (271 aa).

The protein belongs to the transferase hexapeptide repeat family. LpxA subfamily. Homotrimer.

The protein localises to the cytoplasm. It catalyses the reaction a (3R)-hydroxyacyl-[ACP] + UDP-N-acetyl-alpha-D-glucosamine = a UDP-3-O-[(3R)-3-hydroxyacyl]-N-acetyl-alpha-D-glucosamine + holo-[ACP]. The protein operates within glycolipid biosynthesis; lipid IV(A) biosynthesis; lipid IV(A) from (3R)-3-hydroxytetradecanoyl-[acyl-carrier-protein] and UDP-N-acetyl-alpha-D-glucosamine: step 1/6. Functionally, involved in the biosynthesis of lipid A, a phosphorylated glycolipid that anchors the lipopolysaccharide to the outer membrane of the cell. The protein is Acyl-[acyl-carrier-protein]--UDP-N-acetylglucosamine O-acyltransferase of Rhizobium rhizogenes (strain K84 / ATCC BAA-868) (Agrobacterium radiobacter).